The primary structure comprises 87 residues: uncharacterized protein (87 aa).

The helical transmembrane segment at 48–70 (GIYIPHTLIFWMCPRAMGTAITF) threads the bilayer.

The protein localises to the host membrane. This is an uncharacterized protein from Gallid herpesvirus 2 (strain Chicken/Md5/ATCC VR-987) (GaHV-2).